Here is a 620-residue protein sequence, read N- to C-terminus: E3 ubiquitin-protein ligase DTX1 (620 aa).

WWE domains are found at residues 14-94 (GLGF…PVRR) and 95-171 (NFYD…RLRR). Disordered regions lie at residues 221 to 248 (SQRR…LAVR), 262 to 313 (PAAG…SIPP), and 361 to 391 (PPVS…KSKN). 2 stretches are compositionally biased toward pro residues: residues 227–241 (PPAP…PGGP) and 268–280 (EPAP…PRSP). An SH3-binding motif is present at residues 230 to 233 (PPLP). Positions 291-307 (QNNLNRPGPQRTTSVSA) are enriched in polar residues. Residues 379 to 389 (RKTKKKHLKKS) are compositionally biased toward basic residues. The RING-type zinc-finger motif lies at 411–472 (CTICMERLVT…DGSLQCPTCK (62 aa)).

It belongs to the Deltex family. As to quaternary structure, homodimer. May form a heterodimer with other members of the Deltex family. Interacts with NOTCH1 via its N-terminal region and EIF3F, the interaction is required for NOTCH1 deubiquitination. Interacts with EP300. Forms a heterodimer with BBAP; the heterodimerization leading to an increase of in vitro ubiquitin ligase activity. Interacts with ITCH. Ubiquitinated; undergoes 'Lys-29'-linked polyubiquitination catalyzed by ITCH. Widely expressed. Strongly expressed in blood vessel. Also expressed in embryonic nervous system, pancreas, lung, adrenal gland, digestive tube and muscles. Expressed in MZB cells and developing B- and T-cells.

It is found in the cytoplasm. It localises to the nucleus. The catalysed reaction is S-ubiquitinyl-[E2 ubiquitin-conjugating enzyme]-L-cysteine + [acceptor protein]-L-lysine = [E2 ubiquitin-conjugating enzyme]-L-cysteine + N(6)-ubiquitinyl-[acceptor protein]-L-lysine.. It participates in protein modification; protein ubiquitination. In terms of biological role, functions as a ubiquitin ligase protein in vivo, mediating ubiquitination and promoting degradation of MEKK1, suggesting that it may regulate the Notch pathway via some ubiquitin ligase activity. Regulator of Notch signaling, a signaling pathway involved in cell-cell communications that regulates a broad spectrum of cell-fate determinations. Mainly acts as a positive regulator of Notch, but it also acts as a negative regulator, depending on the developmental and cell context. Mediates the antineural activity of Notch, possibly by inhibiting the transcriptional activation mediated by MATCH1. Involved in neurogenesis, lymphogenesis and myogenesis, and may also be involved in MZB (Marginal zone B) cell differentiation. Promotes B-cell development at the expense of T-cell development, suggesting that it can antagonize NOTCH1. This is E3 ubiquitin-protein ligase DTX1 (DTX1) from Homo sapiens (Human).